Here is a 156-residue protein sequence, read N- to C-terminus: Large ribosomal subunit protein eL29 (156 aa).

Residues 1–26 show a composition bias toward basic residues; sequence MAKSKNHTTHNQSRKWHRNGIKKPRS. Disordered regions lie at residues 1 to 35 and 116 to 156; these read MAKS…LKGV and RRLC…VKAP. Lysine 5 is modified (N6-methyllysine). A Phosphoserine modification is found at serine 31. An N6-acetyllysine modification is found at lysine 33. Repeat copies occupy residues 129-136 and 137-144. The 2 X 8 AA tandem repeats of A-X-A-K-A-P-A-[KQ] stretch occupies residues 129-144; that stretch reads AEAKAPAKAQAKAPAQ. The segment covering 134–156 has biased composition (low complexity); sequence PAKAQAKAPAQAPKGAQAPVKAP.

It belongs to the eukaryotic ribosomal protein eL29 family. In terms of assembly, component of the large ribosomal subunit.

Its subcellular location is the cytoplasm. Functionally, component of the large ribosomal subunit. The ribosome is a large ribonucleoprotein complex responsible for the synthesis of proteins in the cell. The sequence is that of Large ribosomal subunit protein eL29 (Rpl29) from Rattus norvegicus (Rat).